Reading from the N-terminus, the 379-residue chain is MDAFKQQLEQLSAQNQYRSIPDLVHQGRYIMRENRKMLNMSSNDYLGLASNENLRQSFLQQYGGNFPSFTSSSSRLLTGNFPIYTDLEELVAQRFQRESALLFNSGYHANIGILPALTTKSLILADKLVHASMIDGIRLSQCEFFRYRHNDYEHLKNLLEKNVGKFDRTFIVTESVFSMDGDVADLKQLVQLKKQFPNTYLYVDEAHAIGVYGKNGLGIAERANVIADIDLLVGTFGKALASMGAYVVCDQILKECLINQMRPLIFSTALPPFNVAWTYFIFERLPQFSKERSHLERLSAFLRQEVEHRTQIMPSQTCIVPYILGENEATLAKAKDLQEQGYYCLPIRPPTVPKGTSRIRLSLTADMTMDEVKQFVACL.

Arginine 18 contacts substrate. 106-107 is a binding site for pyridoxal 5'-phosphate; it reads GY. A substrate-binding site is contributed by histidine 130. Pyridoxal 5'-phosphate-binding positions include serine 178, 204–207, and 235–238; these read DEAH and TFGK. Lysine 238 carries the N6-(pyridoxal phosphate)lysine modification. Threonine 351 is a binding site for substrate.

It belongs to the class-II pyridoxal-phosphate-dependent aminotransferase family. BioF subfamily. As to quaternary structure, homodimer. It depends on pyridoxal 5'-phosphate as a cofactor.

It catalyses the reaction 6-carboxyhexanoyl-[ACP] + L-alanine + H(+) = (8S)-8-amino-7-oxononanoate + holo-[ACP] + CO2. It functions in the pathway cofactor biosynthesis; biotin biosynthesis. In terms of biological role, catalyzes the decarboxylative condensation of pimeloyl-[acyl-carrier protein] and L-alanine to produce 8-amino-7-oxononanoate (AON), [acyl-carrier protein], and carbon dioxide. The protein is Putative 8-amino-7-oxononanoate synthase (bioF) of Haemophilus influenzae (strain 86-028NP).